The following is a 483-amino-acid chain: UDP-N-acetylmuramoyl-L-alanyl-D-glutamate--2,6-diaminopimelate ligase (483 aa).

A UDP-N-acetyl-alpha-D-muramoyl-L-alanyl-D-glutamate-binding site is contributed by Ser-30. Gly-109 to Thr-115 is an ATP binding site. UDP-N-acetyl-alpha-D-muramoyl-L-alanyl-D-glutamate is bound by residues Thr-151–Thr-152, Ser-178, and Arg-186. Lys-218 is subject to N6-carboxylysine. Meso-2,6-diaminopimelate-binding positions include Arg-380, Asp-403–Arg-406, Gly-453, and Glu-457. A Meso-diaminopimelate recognition motif motif is present at residues Asp-403 to Arg-406.

It belongs to the MurCDEF family. MurE subfamily. The cofactor is Mg(2+). In terms of processing, carboxylation is probably crucial for Mg(2+) binding and, consequently, for the gamma-phosphate positioning of ATP.

The protein resides in the cytoplasm. The catalysed reaction is UDP-N-acetyl-alpha-D-muramoyl-L-alanyl-D-glutamate + meso-2,6-diaminopimelate + ATP = UDP-N-acetyl-alpha-D-muramoyl-L-alanyl-gamma-D-glutamyl-meso-2,6-diaminopimelate + ADP + phosphate + H(+). The protein operates within cell wall biogenesis; peptidoglycan biosynthesis. Functionally, catalyzes the addition of meso-diaminopimelic acid to the nucleotide precursor UDP-N-acetylmuramoyl-L-alanyl-D-glutamate (UMAG) in the biosynthesis of bacterial cell-wall peptidoglycan. This Chlamydia abortus (strain DSM 27085 / S26/3) (Chlamydophila abortus) protein is UDP-N-acetylmuramoyl-L-alanyl-D-glutamate--2,6-diaminopimelate ligase.